The chain runs to 91 residues: Large ribosomal subunit protein bL31B (91 aa).

Belongs to the bacterial ribosomal protein bL31 family. Type B subfamily. Part of the 50S ribosomal subunit.

This Mycolicibacterium vanbaalenii (strain DSM 7251 / JCM 13017 / BCRC 16820 / KCTC 9966 / NRRL B-24157 / PYR-1) (Mycobacterium vanbaalenii) protein is Large ribosomal subunit protein bL31B.